The chain runs to 457 residues: SH3 domain-binding protein 5 (457 aa).

Basic and acidic residues predominate over residues Met-1–Glu-12. The interval Met-1–Leu-68 is disordered. Over residues Glu-25–Val-43 the composition is skewed to acidic residues. A sufficient for interaction with RAB11A and for guanine nucleotide exchange activity region spans residues Met-33 to Ala-267. Basic and acidic residues predominate over residues Asp-44 to Lys-53. Coiled-coil stretches lie at residues Arg-46–Lys-92, Asp-99–Glu-147, Ala-156–Lys-202, and Tyr-213–Asp-257. Over residues Asn-308 to Glu-319 the composition is skewed to acidic residues. The tract at residues Asn-308–Gly-347 is disordered. Residues Ser-322–Ser-334 are compositionally biased toward low complexity. Ser-353 is modified (phosphoserine; by MAPK12 and MAPK9). Residues Ser-371 to Gln-427 are disordered. 2 positions are modified to phosphoserine: Ser-377 and Ser-378. The segment covering Glu-382–Asp-398 has biased composition (basic and acidic residues). The span at Leu-406–Gln-427 shows a compositional bias: low complexity. At Ser-420 the chain carries Phosphoserine. The residue at position 423 (Ser-423) is a Phosphoserine; by MAPK12.

This sequence belongs to the SH3BP5 family. Interacts with BTK. Interacts with all isoforms of MAPK8, MAPK9, MAPK10 and MAPK12. Interacts with GDP-bound and nucleotide-free forms of RAB11A.

The protein localises to the cytoplasmic vesicle membrane. It localises to the mitochondrion. Its function is as follows. Functions as a guanine nucleotide exchange factor (GEF) with specificity for RAB11A and RAB25. Inhibits the auto- and transphosphorylation activity of BTK. Plays a negative regulatory role in BTK-related cytoplasmic signaling in B-cells. May be involved in BCR-induced apoptotic cell death. This Rattus norvegicus (Rat) protein is SH3 domain-binding protein 5 (Sh3bp5).